A 141-amino-acid chain; its full sequence is Nucleoside diphosphate kinase (141 aa).

Lysine 9, phenylalanine 57, arginine 85, threonine 91, arginine 102, and asparagine 112 together coordinate ATP. Histidine 115 (pros-phosphohistidine intermediate) is an active-site residue.

This sequence belongs to the NDK family. As to quaternary structure, homotetramer. Mg(2+) serves as cofactor.

The protein localises to the cytoplasm. The catalysed reaction is a 2'-deoxyribonucleoside 5'-diphosphate + ATP = a 2'-deoxyribonucleoside 5'-triphosphate + ADP. The enzyme catalyses a ribonucleoside 5'-diphosphate + ATP = a ribonucleoside 5'-triphosphate + ADP. Major role in the synthesis of nucleoside triphosphates other than ATP. The ATP gamma phosphate is transferred to the NDP beta phosphate via a ping-pong mechanism, using a phosphorylated active-site intermediate. The sequence is that of Nucleoside diphosphate kinase from Chlamydia muridarum (strain MoPn / Nigg).